A 492-amino-acid polypeptide reads, in one-letter code: Ribose import ATP-binding protein RbsA (492 aa).

2 consecutive ABC transporter domains span residues 3 to 239 and 238 to 492; these read IDMR…VGRK and RKLE…TGGK. 35–42 is an ATP binding site; sequence GENGAGKS.

The protein belongs to the ABC transporter superfamily. Ribose importer (TC 3.A.1.2.1) family. In terms of assembly, the complex is composed of an ATP-binding protein (RbsA), two transmembrane proteins (RbsC) and a solute-binding protein (RbsB).

It localises to the cell membrane. The catalysed reaction is D-ribose(out) + ATP + H2O = D-ribose(in) + ADP + phosphate + H(+). Part of the ABC transporter complex RbsABC involved in ribose import. Responsible for energy coupling to the transport system. The protein is Ribose import ATP-binding protein RbsA of Streptococcus agalactiae serotype III (strain NEM316).